A 236-amino-acid chain; its full sequence is MSEAPRAETFVFLDLEATGLPSVEPEIAELSLFAVHRSSLENPEHDESGALVLPRVLDKLTLCMCPERPFTAKASEITGLSSEGLARCRKAGFDGAVVRTLQAFLSRQAGPICLVAHNGFDYDFPLLCAELRRLGARLPRDTVCLDTLPALRGLDRAHSHGTRARGRQGYSLGSLFHRYFRAEPSAAHSAEGDVHTLLLIFLHRAAELLAWADEQARGWAHIEPMYLPPDDPSLEA.

The Mg(2+) site is built by aspartate 14 and glutamate 16. Substrate is bound by residues 16–17 (EA) and tyrosine 122. The active-site Proton donor/acceptor is the histidine 188. Residue aspartate 193 participates in Mg(2+) binding. Aspartate 193 contacts substrate.

The protein belongs to the exonuclease superfamily. TREX family. As to quaternary structure, homodimer. Mg(2+) is required as a cofactor. Detected in heart, breast, prostate, skeletal muscle, testis, uterus, bone marrow, colon, small intestine, stomach and thymus.

The protein resides in the nucleus. It catalyses the reaction Exonucleolytic cleavage in the 3'- to 5'-direction to yield nucleoside 5'-phosphates.. Functionally, exonuclease with a preference for double-stranded DNA with mismatched 3' termini. May play a role in DNA repair. In Homo sapiens (Human), this protein is Three prime repair exonuclease 2 (TREX2).